Consider the following 284-residue polypeptide: Pseudopaline exporter CntI (284 aa).

10 helical membrane passes run 2–22, 34–54, 74–94, 96–116, 122–142, 147–167, 179–199, 209–229, 236–256, and 259–279; these read VLDL…TFSV, LPAA…IYLL, GVMG…IPLA, ASIL…LFLG, AVYW…KPFS, SVYA…SVAI, IVFY…WSDF, GLLL…TRAF, IVAV…WLFW, and VPDA…IALS. EamA domains follow at residues 8–138 and 151–279; these read SGVL…LMIV and VVGL…IALS.

It belongs to the EamA transporter family.

It localises to the cell inner membrane. In terms of biological role, transports the metallophore pseudopaline, which is involved in the acquisition of nickel and zinc, and thus enables bacterial growth inside the host, where metal access is limited. Is probably involved in the export of pseudopaline. The chain is Pseudopaline exporter CntI from Pseudomonas aeruginosa (strain UCBPP-PA14).